Consider the following 94-residue polypeptide: Pyrimidine/purine nucleoside phosphorylase 2 (94 aa).

Belongs to the nucleoside phosphorylase PpnP family.

It catalyses the reaction a purine D-ribonucleoside + phosphate = a purine nucleobase + alpha-D-ribose 1-phosphate. It carries out the reaction adenosine + phosphate = alpha-D-ribose 1-phosphate + adenine. The catalysed reaction is cytidine + phosphate = cytosine + alpha-D-ribose 1-phosphate. The enzyme catalyses guanosine + phosphate = alpha-D-ribose 1-phosphate + guanine. It catalyses the reaction inosine + phosphate = alpha-D-ribose 1-phosphate + hypoxanthine. It carries out the reaction thymidine + phosphate = 2-deoxy-alpha-D-ribose 1-phosphate + thymine. The catalysed reaction is uridine + phosphate = alpha-D-ribose 1-phosphate + uracil. The enzyme catalyses xanthosine + phosphate = alpha-D-ribose 1-phosphate + xanthine. Catalyzes the phosphorolysis of diverse nucleosides, yielding D-ribose 1-phosphate and the respective free bases. Can use uridine, adenosine, guanosine, cytidine, thymidine, inosine and xanthosine as substrates. Also catalyzes the reverse reactions. This Psychrobacter arcticus (strain DSM 17307 / VKM B-2377 / 273-4) protein is Pyrimidine/purine nucleoside phosphorylase 2.